Reading from the N-terminus, the 94-residue chain is Pyrimidine/purine nucleoside phosphorylase (94 aa).

It belongs to the nucleoside phosphorylase PpnP family.

The enzyme catalyses a purine D-ribonucleoside + phosphate = a purine nucleobase + alpha-D-ribose 1-phosphate. It catalyses the reaction adenosine + phosphate = alpha-D-ribose 1-phosphate + adenine. The catalysed reaction is cytidine + phosphate = cytosine + alpha-D-ribose 1-phosphate. It carries out the reaction guanosine + phosphate = alpha-D-ribose 1-phosphate + guanine. The enzyme catalyses inosine + phosphate = alpha-D-ribose 1-phosphate + hypoxanthine. It catalyses the reaction thymidine + phosphate = 2-deoxy-alpha-D-ribose 1-phosphate + thymine. The catalysed reaction is uridine + phosphate = alpha-D-ribose 1-phosphate + uracil. It carries out the reaction xanthosine + phosphate = alpha-D-ribose 1-phosphate + xanthine. Functionally, catalyzes the phosphorolysis of diverse nucleosides, yielding D-ribose 1-phosphate and the respective free bases. Can use uridine, adenosine, guanosine, cytidine, thymidine, inosine and xanthosine as substrates. Also catalyzes the reverse reactions. The polypeptide is Pyrimidine/purine nucleoside phosphorylase (Pseudomonas entomophila (strain L48)).